The sequence spans 353 residues: Probable butyrate kinase (353 aa).

It belongs to the acetokinase family.

It is found in the cytoplasm. It catalyses the reaction butanoate + ATP = butanoyl phosphate + ADP. The chain is Probable butyrate kinase from Bacteroides thetaiotaomicron (strain ATCC 29148 / DSM 2079 / JCM 5827 / CCUG 10774 / NCTC 10582 / VPI-5482 / E50).